The primary structure comprises 213 residues: ATP phosphoribosyltransferase (213 aa).

It belongs to the ATP phosphoribosyltransferase family. Short subfamily. In terms of assembly, heteromultimer composed of HisG and HisZ subunits.

It localises to the cytoplasm. It carries out the reaction 1-(5-phospho-beta-D-ribosyl)-ATP + diphosphate = 5-phospho-alpha-D-ribose 1-diphosphate + ATP. The protein operates within amino-acid biosynthesis; L-histidine biosynthesis; L-histidine from 5-phospho-alpha-D-ribose 1-diphosphate: step 1/9. In terms of biological role, catalyzes the condensation of ATP and 5-phosphoribose 1-diphosphate to form N'-(5'-phosphoribosyl)-ATP (PR-ATP). Has a crucial role in the pathway because the rate of histidine biosynthesis seems to be controlled primarily by regulation of HisG enzymatic activity. This chain is ATP phosphoribosyltransferase, found in Crocosphaera subtropica (strain ATCC 51142 / BH68) (Cyanothece sp. (strain ATCC 51142)).